The sequence spans 287 residues: uncharacterized protein (287 aa).

2 helical membrane passes run I12–L32 and Y217–V237.

The protein resides in the cell membrane. This is an uncharacterized protein from Mycoplasma pneumoniae (strain ATCC 29342 / M129 / Subtype 1) (Mycoplasmoides pneumoniae).